The primary structure comprises 174 residues: 3-hydroxydecanoyl-[acyl-carrier-protein] dehydratase (174 aa).

Histidine 73 is a catalytic residue.

This sequence belongs to the thioester dehydratase family. FabA subfamily. In terms of assembly, homodimer.

Its subcellular location is the cytoplasm. It carries out the reaction a (3R)-hydroxyacyl-[ACP] = a (2E)-enoyl-[ACP] + H2O. The catalysed reaction is (3R)-hydroxydecanoyl-[ACP] = (2E)-decenoyl-[ACP] + H2O. It catalyses the reaction (2E)-decenoyl-[ACP] = (3Z)-decenoyl-[ACP]. Its pathway is lipid metabolism; fatty acid biosynthesis. Necessary for the introduction of cis unsaturation into fatty acids. Catalyzes the dehydration of (3R)-3-hydroxydecanoyl-ACP to E-(2)-decenoyl-ACP and then its isomerization to Z-(3)-decenoyl-ACP. Can catalyze the dehydratase reaction for beta-hydroxyacyl-ACPs with saturated chain lengths up to 16:0, being most active on intermediate chain length. This chain is 3-hydroxydecanoyl-[acyl-carrier-protein] dehydratase, found in Saccharophagus degradans (strain 2-40 / ATCC 43961 / DSM 17024).